A 96-amino-acid polypeptide reads, in one-letter code: uncharacterized protein (96 aa).

The protein belongs to the NifU family.

This is an uncharacterized protein from Azotobacter vinelandii.